The primary structure comprises 103 residues: Ribonuclease VapC14 (103 aa).

Residues 3–74 form the PINc domain; sequence YVLDTNVVSA…WFDDKVLRIF (72 aa). Residue Asp-6 participates in Mg(2+) binding.

This sequence belongs to the PINc/VapC protein family. It depends on Mg(2+) as a cofactor.

Toxic component of a type II toxin-antitoxin (TA) system. An RNase. The cognate antitoxin is VapB14. The sequence is that of Ribonuclease VapC14 (vapC14) from Mycobacterium tuberculosis (strain CDC 1551 / Oshkosh).